The chain runs to 208 residues: Uracil phosphoribosyltransferase (208 aa).

5-phospho-alpha-D-ribose 1-diphosphate contacts are provided by residues arginine 78, arginine 103, and 130–138; that span reads DPMLATGGS. Residues isoleucine 193 and 198–200 contribute to the uracil site; that span reads GDA. Aspartate 199 contributes to the 5-phospho-alpha-D-ribose 1-diphosphate binding site.

It belongs to the UPRTase family. Mg(2+) is required as a cofactor.

It catalyses the reaction UMP + diphosphate = 5-phospho-alpha-D-ribose 1-diphosphate + uracil. It participates in pyrimidine metabolism; UMP biosynthesis via salvage pathway; UMP from uracil: step 1/1. Allosterically activated by GTP. Functionally, catalyzes the conversion of uracil and 5-phospho-alpha-D-ribose 1-diphosphate (PRPP) to UMP and diphosphate. This chain is Uracil phosphoribosyltransferase, found in Aliivibrio fischeri (strain MJ11) (Vibrio fischeri).